Here is a 1356-residue protein sequence, read N- to C-terminus: RHO1 GDP-GTP exchange protein 2 (1356 aa).

Residue serine 2 is modified to N-acetylserine. Disordered stretches follow at residues 74–94 (RRSG…EMKG) and 109–175 (EVPD…PRNE). Residue serine 76 is modified to Phosphoserine. 2 stretches are compositionally biased toward polar residues: residues 109-125 (EVPD…TPVS) and 147-157 (HIYSTSNSASR). Phosphoserine is present on serine 193. Disordered stretches follow at residues 202–291 (LKKQ…RSMS), 303–362 (SFQS…SSSN), 383–409 (SVSG…VMSA), 531–571 (GNHS…SQQK), and 626–645 (NISM…TSSV). Over residues 204–221 (KQSSFSTGSASTTPTQAR) the composition is skewed to polar residues. Serine 223 is modified (phosphoserine). Over residues 235–244 (SSKDLHEQHQ) the composition is skewed to basic and acidic residues. Residues 250 to 265 (QHNNINNHNNNNTNNN) are compositionally biased toward low complexity. Residues 271–281 (VGSSNSNYPQH) are compositionally biased toward polar residues. A compositionally biased stretch (low complexity) spans 282-291 (SHSISSRSMS). The span at 303–325 (SFQSKTSNSRKATQKYDITSNPF) shows a compositional bias: polar residues. The span at 329 to 338 (HHHHHHHHSS) shows a compositional bias: basic residues. Low complexity-rich tracts occupy residues 339-362 (NSHS…SSSN) and 383-401 (SVSG…TPLS). Phosphoserine is present on residues serine 566 and serine 628. In terms of domain architecture, DH spans 659 to 846 (KRQEAIYEVY…RDFMKRIDQA (188 aa)). Positions 1034 to 1336 (TNKINSVTSC…RLLQTSTQEI (303 aa)) constitute a CNH domain.

Functionally, stimulates the exchange of RHO1 GDP-bound form into GTP-bound form. The protein is RHO1 GDP-GTP exchange protein 2 (ROM2) of Saccharomyces cerevisiae (strain ATCC 204508 / S288c) (Baker's yeast).